The primary structure comprises 128 residues: Small ribosomal subunit protein uS12 (128 aa).

Residues 1–30 (MPTINQLIRKGREPKERKSKSPALMGNPQK) are disordered. Aspartate 89 carries the post-translational modification 3-methylthioaspartic acid. Residues 106-128 (GVEGRKQGRSKYGTKRPKEGGKK) form a disordered region.

It belongs to the universal ribosomal protein uS12 family. As to quaternary structure, part of the 30S ribosomal subunit. Contacts proteins S8 and S17. May interact with IF1 in the 30S initiation complex.

Functionally, with S4 and S5 plays an important role in translational accuracy. In terms of biological role, interacts with and stabilizes bases of the 16S rRNA that are involved in tRNA selection in the A site and with the mRNA backbone. Located at the interface of the 30S and 50S subunits, it traverses the body of the 30S subunit contacting proteins on the other side and probably holding the rRNA structure together. The combined cluster of proteins S8, S12 and S17 appears to hold together the shoulder and platform of the 30S subunit. In Dictyoglomus thermophilum (strain ATCC 35947 / DSM 3960 / H-6-12), this protein is Small ribosomal subunit protein uS12.